Here is a 125-residue protein sequence, read N- to C-terminus: Small ribosomal subunit protein uS13 (125 aa).

A disordered region spans residues 97-125 (PVRGQKTRSNARTRKGPRPSRIKTKKKSS). A compositionally biased stretch (basic residues) spans 101–125 (QKTRSNARTRKGPRPSRIKTKKKSS).

This sequence belongs to the universal ribosomal protein uS13 family. Part of the 30S ribosomal subunit. Forms a loose heterodimer with protein S19. Forms two bridges to the 50S subunit in the 70S ribosome.

Its function is as follows. Located at the top of the head of the 30S subunit, it contacts several helices of the 16S rRNA. In the 70S ribosome it contacts the 23S rRNA (bridge B1a) and protein L5 of the 50S subunit (bridge B1b), connecting the 2 subunits; these bridges are implicated in subunit movement. Contacts the tRNAs in the A and P-sites. In Thermotoga neapolitana (strain ATCC 49049 / DSM 4359 / NBRC 107923 / NS-E), this protein is Small ribosomal subunit protein uS13.